The sequence spans 460 residues: MAEKKMWGGRFRQATAALVEEYTQSVSFDRALYAQDIAGSKAHARMLAKQGVLTADEAARIVEGLDMVLAEIEGGTFVWRRELEDVHMNIESRLTELVGDVGKKLHTGRSRNDQVALDFRLFVSDRIRAWRGLARDLVAVLAERAGEHANTLLPGCTHMQPAQPVSLGHHLLAYAWMLRRDAERLADCDRRTRVCPLGAAALAGTTYPLDPAYVAEQLDMYGTFRNSMDAVSDRDFVLESLFCGATIMAHLSRLCEEIIIWANPAFGFVRLPDAYATGSSIMPQKKNPDVAEIMRGKTGRVYGALTAMLTTVKGLPMTYNRDMQEDKEPFLDCDRTVSASLEIMAGMLRELGFNEGRMRAALRAGFLNATELADYLVGKGIPFREAHHLTGAAVALAEERAITLEELPLADLQAICDRIGDDVYAVLDPAAAVARREMPGGTGPASVAAQLAELSGWLEE.

This sequence belongs to the lyase 1 family. Argininosuccinate lyase subfamily.

Its subcellular location is the cytoplasm. The enzyme catalyses 2-(N(omega)-L-arginino)succinate = fumarate + L-arginine. It participates in amino-acid biosynthesis; L-arginine biosynthesis; L-arginine from L-ornithine and carbamoyl phosphate: step 3/3. This is Argininosuccinate lyase from Nitratidesulfovibrio vulgaris (strain DSM 19637 / Miyazaki F) (Desulfovibrio vulgaris).